Consider the following 105-residue polypeptide: Putative thioredoxin-5 (105 aa).

The region spanning 1–104 (MYKEPKNESE…VALENMVKKL (104 aa)) is the Thioredoxin domain. Catalysis depends on nucleophile residues Cys-30 and Cys-33. Cys-30 and Cys-33 are disulfide-bonded.

The protein belongs to the thioredoxin family.

Its function is as follows. Participates in various redox reactions through the reversible oxidation of its active center dithiol to a disulfide and catalyzes dithiol-disulfide exchange reactions. The sequence is that of Putative thioredoxin-5 (trxE) from Dictyostelium discoideum (Social amoeba).